We begin with the raw amino-acid sequence, 230 residues long: Small ribosomal subunit protein uS3 (230 aa).

Residues 43–95 (VNRVIIYSARPKMISEERKAHLAKLLELKFGLEKPVIEVLPIENPNLDAHVIA) enclose the KH type-2 domain.

The protein belongs to the universal ribosomal protein uS3 family. Part of the 30S ribosomal subunit.

Its function is as follows. Binds the lower part of the 30S subunit head. The protein is Small ribosomal subunit protein uS3 of Nanoarchaeum equitans (strain Kin4-M).